The chain runs to 315 residues: Methionyl-tRNA formyltransferase (315 aa).

A (6S)-5,6,7,8-tetrahydrofolate-binding site is contributed by 113 to 116; that stretch reads SLLP.

It belongs to the Fmt family.

It catalyses the reaction L-methionyl-tRNA(fMet) + (6R)-10-formyltetrahydrofolate = N-formyl-L-methionyl-tRNA(fMet) + (6S)-5,6,7,8-tetrahydrofolate + H(+). In terms of biological role, attaches a formyl group to the free amino group of methionyl-tRNA(fMet). The formyl group appears to play a dual role in the initiator identity of N-formylmethionyl-tRNA by promoting its recognition by IF2 and preventing the misappropriation of this tRNA by the elongation apparatus. This is Methionyl-tRNA formyltransferase from Pectobacterium atrosepticum (strain SCRI 1043 / ATCC BAA-672) (Erwinia carotovora subsp. atroseptica).